A 42-amino-acid polypeptide reads, in one-letter code: Conotoxin Au11.6 (42 aa).

Cystine bridges form between cysteine 6-cysteine 20, cysteine 13-cysteine 25, cysteine 19-cysteine 30, and cysteine 24-cysteine 37.

Belongs to the conotoxin I1 superfamily. In terms of tissue distribution, expressed by the venom duct.

Its subcellular location is the secreted. In Conus aulicus (Princely cone), this protein is Conotoxin Au11.6.